Reading from the N-terminus, the 351-residue chain is Phosphoribosylformylglycinamidine cyclo-ligase (351 aa).

Belongs to the AIR synthase family.

It localises to the cytoplasm. The enzyme catalyses 2-formamido-N(1)-(5-O-phospho-beta-D-ribosyl)acetamidine + ATP = 5-amino-1-(5-phospho-beta-D-ribosyl)imidazole + ADP + phosphate + H(+). It participates in purine metabolism; IMP biosynthesis via de novo pathway; 5-amino-1-(5-phospho-D-ribosyl)imidazole from N(2)-formyl-N(1)-(5-phospho-D-ribosyl)glycinamide: step 2/2. The polypeptide is Phosphoribosylformylglycinamidine cyclo-ligase (Oleidesulfovibrio alaskensis (strain ATCC BAA-1058 / DSM 17464 / G20) (Desulfovibrio alaskensis)).